An 815-amino-acid chain; its full sequence is RNA-binding protein 5 (815 aa).

Residues 1–93 form a disordered region; the sequence is MGSDKRVSRT…EHDYRHDISD (93 aa). Residues Ser-18, Ser-59, Ser-69, Ser-72, and Ser-78 each carry the phosphoserine modification. The RRM 1 domain occupies 98–178; it reads KTIMLRGLPI…KHIAMHYSNP (81 aa). A RanBP2-type zinc finger spans residues 181-210; it reads KFEDWLCNKCCLNNFRKRLKCFRCGADKFD. Positions 231–315 constitute an RRM 2 domain; it reads DTIILRNIAP…KTIGVDFAKS (85 aa). A required for interaction with U2AF2 region spans residues 321–809; sequence VLSDGNRVSA…KDAVRKAMFA (489 aa). The segment covering 411–422 has biased composition (polar residues); sequence QSPQLYNQTSNP. 2 disordered regions span residues 411 to 468 and 507 to 540; these read QSPQ…DESS and PAAESSSHQQSGLPPAKEGKEKKEKPKSKTAQQI. Low complexity predominate over residues 426–446; that stretch reads PTEEAQPSTSTSTQAPAASPT. At Ser-444 the chain carries Phosphoserine. The interval 452–535 is sufficient for interaction with ACIN1, PRPF8, SFRS3, SNRPB, SNRPN, SNRNP70 and SNRNP200; it reads TKYAVPDTST…KEKKEKPKSK (84 aa). Phosphoserine is present on residues Ser-621 and Ser-624. Residues 647 to 677 form a C2H2-type; atypical zinc finger; it reads MACLLCRRQFPNKDALVRHQQLSDLHKQNMD. Positions 743–789 constitute a G-patch domain; it reads HSNIGNKMLQAMGWREGSGLGRKCQGITAPIEAQVRLKGAGLGAKGS.

Belongs to the RBM5/RBM10 family. In terms of assembly, component of the spliceosome A complex (also known as the prespliceosome). Appears to dissociate from the spliceosome upon formation of the spliceosome B complex (also known as the precatalytic spliceosome), in which the heterotrimeric U4/U6.U5 snRNPs are bound. Interacts with U2AF2; this interaction is direct. Also interacts with ACIN1, PRPF8, SFRS3, SNRPB, SNRPN, SNRNP70 and SNRNP200; these interactions may be indirect. Isoform 5 is widely expressed in normal tissues and is expressed at increased levels in T-leukemic cell lines.

It is found in the nucleus. Functionally, component of the spliceosome A complex. Binds to ssRNA containing the consensus sequence 5'-AGGUAA-3'. Regulates alternative splicing of a number of mRNAs. May modulate splice site pairing after recruitment of the U1 and U2 snRNPs to the 5' and 3' splice sites of the intron. May both positively and negatively regulate apoptosis by regulating the alternative splicing of several genes involved in this process, including FAS and CASP2/caspase-2. In the case of FAS, promotes exclusion of exon 6 thereby producing a soluble form of FAS that inhibits apoptosis. In the case of CASP2/caspase-2, promotes exclusion of exon 9 thereby producing a catalytically active form of CASP2/Caspase-2 that induces apoptosis. The chain is RNA-binding protein 5 (RBM5) from Homo sapiens (Human).